The sequence spans 404 residues: Glucose-1-phosphate adenylyltransferase 2 (404 aa).

Alpha-D-glucose 1-phosphate-binding positions include Y97, G162, 177 to 178 (EK), and S195.

Belongs to the bacterial/plant glucose-1-phosphate adenylyltransferase family. As to quaternary structure, homotetramer.

The enzyme catalyses alpha-D-glucose 1-phosphate + ATP + H(+) = ADP-alpha-D-glucose + diphosphate. It functions in the pathway glycan biosynthesis; glycogen biosynthesis. Involved in the biosynthesis of ADP-glucose, a building block required for the elongation reactions to produce glycogen. Catalyzes the reaction between ATP and alpha-D-glucose 1-phosphate (G1P) to produce pyrophosphate and ADP-Glc. The sequence is that of Glucose-1-phosphate adenylyltransferase 2 from Vibrio vulnificus (strain CMCP6).